The chain runs to 401 residues: Chalcone synthase 2 (401 aa).

The active site involves Cys168.

The protein belongs to the thiolase-like superfamily. Chalcone/stilbene synthases family.

The catalysed reaction is (E)-4-coumaroyl-CoA + 3 malonyl-CoA + 3 H(+) = 2',4,4',6'-tetrahydroxychalcone + 3 CO2 + 4 CoA. It participates in secondary metabolite biosynthesis; flavonoid biosynthesis. Functionally, the primary product of this enzyme is 4,2',4',6'-tetrahydroxychalcone (also termed naringenin-chalcone or chalcone) which can under specific conditions spontaneously isomerize into naringenin. The chain is Chalcone synthase 2 (CHS2) from Sorghum bicolor (Sorghum).